The following is a 431-amino-acid chain: Histidine--tRNA ligase (431 aa).

The protein belongs to the class-II aminoacyl-tRNA synthetase family. In terms of assembly, homodimer.

It localises to the cytoplasm. It catalyses the reaction tRNA(His) + L-histidine + ATP = L-histidyl-tRNA(His) + AMP + diphosphate + H(+). This chain is Histidine--tRNA ligase, found in Ligilactobacillus salivarius (strain UCC118) (Lactobacillus salivarius).